A 362-amino-acid polypeptide reads, in one-letter code: Innexin-17 (362 aa).

A run of 4 helical transmembrane segments spans residues 27-47 (YFTV…QYVG), 101-121 (WVPF…VIWN), 189-209 (FLAT…MGLG), and 266-286 (LFIA…FDIF).

This sequence belongs to the pannexin family.

The protein localises to the cell membrane. It is found in the cell junction. Its subcellular location is the gap junction. Structural component of the gap junctions. The protein is Innexin-17 of Caenorhabditis elegans.